A 115-amino-acid chain; its full sequence is MFSRVLVAALVALPVLVSASPTPGGYPDSTTVVSQCNVGELHCCNTQQTPDHTNAAGGLLGAAANVGALLGFDCTPISVIGIGGNNCAAQPVCCEANEFTGLINALSCSPINVNL.

The first 19 residues, M1–A19, serve as a signal peptide directing secretion. Intrachain disulfides connect C36-C93, C43-C87, C44-C74, and C94-C108.

Belongs to the fungal hydrophobin family. In terms of assembly, self-assembles to form functional amyloid fibrils called rodlets. Self-assembly into fibrillar rodlets occurs spontaneously at hydrophobic:hydrophilic interfaces and the rodlets further associate laterally to form amphipathic monolayers.

Its subcellular location is the secreted. It is found in the cell wall. Functionally, aerial growth, conidiation, and dispersal of filamentous fungi in the environment rely upon a capability of their secreting small amphipathic proteins called hydrophobins (HPBs) with low sequence identity. Class I can self-assemble into an outermost layer of rodlet bundles on aerial cell surfaces, conferring cellular hydrophobicity that supports fungal growth, development and dispersal; whereas Class II form highly ordered films at water-air interfaces through intermolecular interactions but contribute nothing to the rodlet structure. The chain is Class I hydrophobin C from Agaricus bisporus (White button mushroom).